The primary structure comprises 236 residues: MAPASSHREHQWTCNLVRGSRLLLLLVVSNLILCQGQAQHPPYCRNQPGKCQIPLQSLFDRATTVANYNSKLAGEMVNRFDEQYGQGINSESKVINCHTSSITTPNSKAEAINTEDKILFKLVISLLHSWDEPLHHAVTELANSKGTSPALLTKAQEIKEKAKVLVDGVEVIQKRIHPGEKNEPYPVWSEQSSLTSQDENVRRVAFYRLFHCLHRDSSKIYTYLRILKCRLTSCET.

An N-terminal signal peptide occupies residues methionine 1–glycine 36. 3 disulfide bridges follow: cysteine 44–cysteine 51, cysteine 97–cysteine 212, and cysteine 229–cysteine 234.

This sequence belongs to the somatotropin/prolactin family.

Its subcellular location is the secreted. This chain is Chorionic somatomammotropin hormone (CSH), found in Ovis aries (Sheep).